The following is a 220-amino-acid chain: Ribosomal RNA large subunit methyltransferase E (220 aa).

S-adenosyl-L-methionine is bound by residues Gly60, Trp62, Asp92, Asp108, and Asp133. Lys173 functions as the Proton acceptor in the catalytic mechanism.

This sequence belongs to the class I-like SAM-binding methyltransferase superfamily. RNA methyltransferase RlmE family.

The protein resides in the cytoplasm. The enzyme catalyses uridine(2552) in 23S rRNA + S-adenosyl-L-methionine = 2'-O-methyluridine(2552) in 23S rRNA + S-adenosyl-L-homocysteine + H(+). In terms of biological role, specifically methylates the uridine in position 2552 of 23S rRNA at the 2'-O position of the ribose in the fully assembled 50S ribosomal subunit. The polypeptide is Ribosomal RNA large subunit methyltransferase E (Burkholderia thailandensis (strain ATCC 700388 / DSM 13276 / CCUG 48851 / CIP 106301 / E264)).